A 96-amino-acid polypeptide reads, in one-letter code: Large ribosomal subunit protein uL23 (96 aa).

This sequence belongs to the universal ribosomal protein uL23 family. Part of the 50S ribosomal subunit. Contacts protein L29, and trigger factor when it is bound to the ribosome.

In terms of biological role, one of the early assembly proteins it binds 23S rRNA. One of the proteins that surrounds the polypeptide exit tunnel on the outside of the ribosome. Forms the main docking site for trigger factor binding to the ribosome. This Bacillus cereus (strain ATCC 10987 / NRS 248) protein is Large ribosomal subunit protein uL23.